A 721-amino-acid chain; its full sequence is Polyribonucleotide nucleotidyltransferase (721 aa).

Positions 495 and 501 each coordinate Mg(2+). The KH domain maps to 562–621 (PRLLSFRIDPELIGTVIGPGGRTIKGITERTNTKIDIEDSGIVTIASHDGAAADEAQKII). Positions 631–699 (GEVFSGSITR…NRGRINLTLR (69 aa)) constitute an S1 motif domain. The disordered stretch occupies residues 698-721 (LRGVPQSGDGAGEEPQPTPVAPLS).

The protein belongs to the polyribonucleotide nucleotidyltransferase family. Requires Mg(2+) as cofactor.

The protein localises to the cytoplasm. It carries out the reaction RNA(n+1) + phosphate = RNA(n) + a ribonucleoside 5'-diphosphate. Involved in mRNA degradation. Catalyzes the phosphorolysis of single-stranded polyribonucleotides processively in the 3'- to 5'-direction. This chain is Polyribonucleotide nucleotidyltransferase, found in Parasynechococcus marenigrum (strain WH8102).